A 1941-amino-acid polypeptide reads, in one-letter code: WD repeat-containing protein 81 (1941 aa).

Residues 1–27 (MAQGSGGREGALRTPAGGWHSPPSPDM) are disordered. The segment at 1–650 (MAQGSGGREG…TPCEASWTRD (650 aa)) is necessary and sufficient for the interaction with SQSTM1. Residues 337-614 (GQPTGQEELR…IPKLLVQTIQ (278 aa)) form the BEACH domain. 6 disordered regions span residues 618 to 637 (GRED…GRPV), 694 to 718 (VASA…EEGR), 1022 to 1074 (SKDL…VSFH), 1097 to 1217 (PQEA…EGKE), 1523 to 1556 (PSSR…DGHS), and 1569 to 1602 (QIPN…DNAL). Residues 1137 to 1146 (LRSGDSSQDL) are compositionally biased toward polar residues. A compositionally biased stretch (acidic residues) spans 1151 to 1174 (GSEEEEEEEDSCVVLEEEEGEQEE). Over residues 1586–1595 (SGVGGGGLGS) the composition is skewed to gly residues. WD repeat units lie at residues 1639-1677 (IRLQ…LWPL), 1686-1724 (ETAP…VWDP), 1729-1769 (TLRT…FVDC), 1777-1815 (EFRL…LLDT), 1819-1856 (LVLR…VWKE), 1860-1896 (KPTH…VCSL), and 1902-1941 (QATT…RLLA).

This sequence belongs to the WD repeat WDR81 family. As to quaternary structure, interacts with WDR91; involved in early to late endosome cargo transport. Interacts with BECN1; negatively regulates the PI3 kinase/PI3K activity associated with endosomal membranes. Interacts with SQSTM1; the interaction is direct and regulates the interaction of SQSTM1 with ubiquitinated proteins. Interacts with MAP1LC3C; recruits MAP1LC3C to ubiquitinated protein aggregates in the aggrephagy process. Widely expressed. In the brain, highest levels in cerebellum and corpus callosum.

The protein resides in the early endosome membrane. The protein localises to the late endosome membrane. It localises to the lysosome membrane. Its subcellular location is the cytoplasmic vesicle. It is found in the autophagosome membrane. The protein resides in the mitochondrion. The protein localises to the cytoplasm. It localises to the cytosol. In terms of biological role, functions as a negative regulator of the PI3 kinase/PI3K activity associated with endosomal membranes via BECN1, a core subunit of the PI3K complex. By modifying the phosphatidylinositol 3-phosphate/PtdInsP3 content of endosomal membranes may regulate endosome fusion, recycling, sorting and early to late endosome transport. It is for instance, required for the delivery of cargos like BST2/tetherin from early to late endosome and thereby participates indirectly to their degradation by the lysosome. May also play a role in aggrephagy, the macroautophagic degradation of ubiquitinated protein aggregates. In this process, may regulate the interaction of SQSTM1 with ubiquitinated proteins and also recruit MAP1LC3C. May also be involved in maintenance of normal mitochondrial structure and organization. The chain is WD repeat-containing protein 81 from Homo sapiens (Human).